The chain runs to 773 residues: LON peptidase N-terminal domain and RING finger protein 1 (773 aa).

Residues 1–29 (MSSPAVARTSPGGSREMAPAPQGRGRFWE) form a disordered region. The TPR 1 repeat unit spans residues 48–81 (WELLLRRGELLALGGHLKGALEAFAAALRRGAPA). Residues 123–159 (CLGCRGFLSEPVTVPCGHSYCRRCLRRELRARCRLCR) form an RING-type 1 zinc finger. 3 TPR repeats span residues 212 to 244 (ARAAGRLGELLHQGRYREALAAACEALRAEPSD), 246 to 278 (IVKIYRAESYAGLQEFKAAIEDLNAVLFQLPDW), and 279 to 312 (PEVYFRKGKVLCDAGFLGDALQLFLQCLALDEDF). Residues 359-370 (EESQSLNEPSPK) are compositionally biased toward polar residues. The tract at residues 359–388 (EESQSLNEPSPKQSEEIPEVTSEPVKGSLN) is disordered. Residue S431 is modified to Phosphoserine. The RING-type 2 zinc finger occupies 479 to 517 (CSLCMRLFFEPVTTPCGHSFCKNCLERCLDHAPYCPLCK). A Lon N-terminal domain is found at 558 to 768 (TAELSHLTKN…KIQHILTYFS (211 aa)).

This Homo sapiens (Human) protein is LON peptidase N-terminal domain and RING finger protein 1 (LONRF1).